A 275-amino-acid chain; its full sequence is Probable siderophore transport system ATP-binding protein YusV (275 aa).

One can recognise an ABC transporter domain in the interval 6-242 (ISTETLSLGY…DLVQNVFSMN (237 aa)). 38–45 (GSNGCGKS) lines the ATP pocket.

Belongs to the ABC transporter superfamily. The iron-hydroxamate siderophore complex is composed of one ATP-binding protein (YusV), two transmembrane proteins (YfiZ and YfhA) and a solute-binding protein (YfiY); the catechoplate siderophore complex is composed of one ATP-binding protein (YusV), two transmembrane proteins (FeuB and FeuC) and a solute-binding protein (FeuA).

It localises to the cell membrane. In terms of biological role, provides the ATPase subunit for at least 2 ABC transporter complexes; YfiYZ/YfhA/YusV involved in import of the iron-hydroxamate siderophores schizokinen, arthrobactin and corprogen, and FeuABC/YusV involved in import of the catecholate siderophores bacillibactin and enterobactin. Probably responsible for energy coupling to the transport system. This is Probable siderophore transport system ATP-binding protein YusV (yusV) from Bacillus subtilis (strain 168).